A 161-amino-acid chain; its full sequence is Arachidonate 5-lipoxygenase-activating protein (161 aa).

The Lumenal segment spans residues 1-8; it reads MDQETVGN. A helical membrane pass occupies residues 9-30; the sequence is VVLLAIVTLISVVQNGFFAHKV. Residues 31-52 lie on the Cytoplasmic side of the membrane; sequence EHESRTQNGRSFQRTGTLAFER. A helical transmembrane segment spans residues 53-77; it reads VYTANQNCVDAYPTFLAVLWSAGLL. The Lumenal portion of the chain corresponds to 78–80; the sequence is CSQ. The chain crosses the membrane as a helical span at residues 81–102; it reads VPAAFAGLMYLLVRQKYFVGYL. The Cytoplasmic segment spans residues 103 to 107; it reads GERTQ. An intramembrane segment occupies 108–115; that stretch reads STPGYIFG. Residues 116-128 traverse the membrane as a helical segment; sequence KRIILFLFLMSVA. Topologically, residues 129–161 are lumenal; sequence GIFNYYLIFFFGSDFENYIKTVTTTISPLLLIP.

It belongs to the MAPEG family. Homotrimer. Interacts with LTC4S and ALOX5.

It is found in the nucleus membrane. The protein localises to the endoplasmic reticulum membrane. Its function is as follows. Required for leukotriene biosynthesis by ALOX5 (5-lipoxygenase). Anchors ALOX5 to the membrane. Binds arachidonic acid, and could play an essential role in the transfer of arachidonic acid to ALOX5. Binds to MK-886, a compound that blocks the biosynthesis of leukotrienes. The chain is Arachidonate 5-lipoxygenase-activating protein (ALOX5AP) from Macaca fascicularis (Crab-eating macaque).